The chain runs to 346 residues: Phosphate acyltransferase (346 aa).

Belongs to the PlsX family. In terms of assembly, homodimer. Probably interacts with PlsY.

Its subcellular location is the cytoplasm. It catalyses the reaction a fatty acyl-[ACP] + phosphate = an acyl phosphate + holo-[ACP]. It participates in lipid metabolism; phospholipid metabolism. Its function is as follows. Catalyzes the reversible formation of acyl-phosphate (acyl-PO(4)) from acyl-[acyl-carrier-protein] (acyl-ACP). This enzyme utilizes acyl-ACP as fatty acyl donor, but not acyl-CoA. The protein is Phosphate acyltransferase of Synechococcus elongatus (strain ATCC 33912 / PCC 7942 / FACHB-805) (Anacystis nidulans R2).